The sequence spans 290 residues: Protein-lysine methyltransferase METTL21E (290 aa).

Residues Trp-96, 124 to 126, Asp-145, Trp-176, and Ala-197 contribute to the S-adenosyl-L-methionine site; that span reads GAG.

Belongs to the methyltransferase superfamily. METTL21 family.

Functionally, protein-lysine methyltransferase. The chain is Protein-lysine methyltransferase METTL21E (METTL21E) from Bos taurus (Bovine).